The chain runs to 193 residues: Histone H5 (193 aa).

The span at 1-11 (TDSPIPAPAPA) shows a compositional bias: pro residues. Disordered stretches follow at residues 1 to 29 (TDSPIPAPAPAAKPKRARAPRKPASHPTY) and 80 to 193 (GVLK…PKKK). Over residues 13–24 (KPKRARAPRKPA) the composition is skewed to basic residues. Residues 25–98 (SHPTYSEMIA…GASGSFRLAK (74 aa)) form the H15 domain. A compositionally biased stretch (basic residues) spans 104 to 193 (RSPAGRKKKK…SGARKSPKKK (90 aa)).

It belongs to the histone H1/H5 family. In terms of tissue distribution, erythroid cells.

The protein localises to the nucleus. The protein resides in the chromosome. Histone H5 performs the same function as H1, being necessary for the condensation of nucleosome chains into higher order structures, and replaces histone H1 in certain cells. The polypeptide is Histone H5 (Anser anser anser (Western greylag goose)).